We begin with the raw amino-acid sequence, 613 residues long: MPSGCSIRALWIINNQDTVVFSRRFPVVEKQWCSAYKTENENTGLDLPRLPTDQQISDSFTRRKRREGSTRGYGIRVAQSTKGSDSWVDDPITRHIISLCLTEEDDDDDDERNILWPIALHTKALYSILVLPLVEPKEMKDYVKLCRRSDCGPAVGEDLSLSSLLLNISSITGAFMVAHAFGDIISGDTVEPEVVVSVSPSVGGLFDSLTGSIGISSRAKPVAAPVASSNPSGAAITGATASDAPKAGSRLLDRDLLRNFIATAMPFGTPLDLSLSNISAMKANGFSSADPPPQELKQPAWKPYLYKGKQRLLFTIHETVSAAMYDRDEIPDNVSVAGQINCRAELEGLPDVSFPLAGLSTAHIEAISFHPCAQVPAHGIDKQNIVFQPPLGNFVLMRYQAGCGLGPPVKGFYQLSMVSEDEGAFLFKVHLMEGYKAPLSMEFCTITMPFPRRRIVAFDGTPSAGTVLTTEHSVEWRILGSGRSLSGKSLEATFPGTIKFSPLQSRRKGDGDDEESEDESAENVVNVEDFLVQKMNKDLPAAELEEPFCWQAYDYAKVSFKIVGASVSRMSIDTKSVNIYPTTKSPVEFSAQVTSGDYILWNTLGKAPSAAVV.

The MHD domain maps to lysine 309–valine 563. The disordered stretch occupies residues serine 501 to glutamate 522. The segment covering glycine 511–alanine 521 has biased composition (acidic residues).

The protein belongs to the adaptor complexes medium subunit family. In terms of assembly, probably part of the adaptor protein complex 5 (AP-5).

The protein localises to the cytoplasmic vesicle membrane. The sequence is that of AP-5 complex subunit mu (AP5M) from Arabidopsis thaliana (Mouse-ear cress).